We begin with the raw amino-acid sequence, 513 residues long: Putative GMP synthase [glutamine-hydrolyzing] (513 aa).

In terms of domain architecture, Glutamine amidotransferase type-1 spans 8–198 (MIVVLDFGGQ…AFAVCGCEGN (191 aa)). Residue Cys-85 is the Nucleophile of the active site. Glu-174 is a catalytic residue. One can recognise a GMPS ATP-PPase domain in the interval 199-388 (WSMENFIELE…LGIPDEVVWR (190 aa)). Residue 226 to 232 (SGGVDSS) participates in ATP binding.

Homodimer.

The catalysed reaction is XMP + L-glutamine + ATP + H2O = GMP + L-glutamate + AMP + diphosphate + 2 H(+). Its pathway is purine metabolism; GMP biosynthesis; GMP from XMP (L-Gln route): step 1/1. Functionally, catalyzes the synthesis of GMP from XMP. This chain is Putative GMP synthase [glutamine-hydrolyzing] (guaA), found in Halalkalibacterium halodurans (strain ATCC BAA-125 / DSM 18197 / FERM 7344 / JCM 9153 / C-125) (Bacillus halodurans).